We begin with the raw amino-acid sequence, 243 residues long: Ribonuclease PH (243 aa).

Phosphate-binding positions include Arg-91 and 129–131 (GTR).

This sequence belongs to the RNase PH family. As to quaternary structure, homohexameric ring arranged as a trimer of dimers.

The enzyme catalyses tRNA(n+1) + phosphate = tRNA(n) + a ribonucleoside 5'-diphosphate. Its function is as follows. Phosphorolytic 3'-5' exoribonuclease that plays an important role in tRNA 3'-end maturation. Removes nucleotide residues following the 3'-CCA terminus of tRNAs; can also add nucleotides to the ends of RNA molecules by using nucleoside diphosphates as substrates, but this may not be physiologically important. Probably plays a role in initiation of 16S rRNA degradation (leading to ribosome degradation) during starvation. This Burkholderia mallei (strain NCTC 10247) protein is Ribonuclease PH.